We begin with the raw amino-acid sequence, 179 residues long: Disulfide bond formation protein B (179 aa).

The Cytoplasmic portion of the chain corresponds to methionine 1 to alanine 14. Residues tryptophan 15 to tyrosine 31 form a helical membrane-spanning segment. The Periplasmic segment spans residues phenylalanine 32–valine 49. An intrachain disulfide couples cysteine 41 to cysteine 44. The helical transmembrane segment at alanine 50–proline 65 threads the bilayer. The Cytoplasmic segment spans residues asparagine 66–tryptophan 72. A helical transmembrane segment spans residues leucine 73–isoleucine 90. Topologically, residues lysine 91 to glutamate 146 are periplasmic. A disulfide bridge links cysteine 105 with cysteine 132. A helical transmembrane segment spans residues tryptophan 147 to serine 165. Residues glutamine 166–arginine 179 lie on the Cytoplasmic side of the membrane.

It belongs to the DsbB family.

It is found in the cell inner membrane. Functionally, required for disulfide bond formation in some periplasmic proteins. Acts by oxidizing the DsbA protein. In Haemophilus ducreyi (strain 35000HP / ATCC 700724), this protein is Disulfide bond formation protein B.